The primary structure comprises 74 residues: Toxin Td6 (74 aa).

The N-terminal stretch at 1–8 (IGMIVECE) is a signal peptide. Residues 9–71 (KEGYLMEANG…IWDSATNTCG (63 aa)) form the LCN-type CS-alpha/beta domain. 4 disulfides stabilise this stretch: Cys-19-Cys-70, Cys-23-Cys-45, Cys-31-Cys-51, and Cys-35-Cys-53. Arg-72 bears the Arginine amide mark.

The protein belongs to the long (4 C-C) scorpion toxin superfamily. Sodium channel inhibitor family. Beta subfamily. In terms of tissue distribution, expressed by the venom gland.

Its subcellular location is the secreted. Beta toxins bind voltage-independently at site-4 of sodium channels (Nav) and shift the voltage of activation toward more negative potentials thereby affecting sodium channel activation and promoting spontaneous and repetitive firing. The polypeptide is Toxin Td6 (Tityus discrepans (Venezuelan scorpion)).